Consider the following 391-residue polypeptide: Digeranylgeranylglycerophospholipid reductase (391 aa).

FAD is bound by residues Gly-18, Glu-37, Cys-48, Ala-49, Ala-51, Arg-98, Ala-122, Asp-279, Gly-291, and Ile-292.

This sequence belongs to the geranylgeranyl reductase family. DGGGPL reductase subfamily. FAD serves as cofactor.

It carries out the reaction a 2,3-bis-O-phytanyl-sn-glycerol 1-phospholipid + 8 A = a 2,3-bis-O-(geranylgeranyl)-sn-glycerol 1-phospholipid + 8 AH2. The enzyme catalyses 2,3-bis-O-(phytanyl)-sn-glycerol 1-phosphate + 8 A = 2,3-bis-O-(geranylgeranyl)-sn-glycerol 1-phosphate + 8 AH2. It catalyses the reaction CDP-2,3-bis-O-(geranylgeranyl)-sn-glycerol + 8 AH2 = CDP-2,3-bis-O-(phytanyl)-sn-glycerol + 8 A. The catalysed reaction is archaetidylserine + 8 AH2 = 2,3-bis-O-phytanyl-sn-glycero-3-phospho-L-serine + 8 A. Its pathway is membrane lipid metabolism; glycerophospholipid metabolism. Its function is as follows. Is involved in the reduction of 2,3-digeranylgeranylglycerophospholipids (unsaturated archaeols) into 2,3-diphytanylglycerophospholipids (saturated archaeols) in the biosynthesis of archaeal membrane lipids. Catalyzes the formation of archaetidic acid (2,3-di-O-phytanyl-sn-glyceryl phosphate) from 2,3-di-O-geranylgeranylglyceryl phosphate (DGGGP) via the hydrogenation of each double bond of the isoprenoid chains. Is also probably able to reduce double bonds of geranyl groups in CDP-2,3-bis-O-(geranylgeranyl)-sn-glycerol and archaetidylserine, thus acting at various stages in the biosynthesis of archaeal membrane lipids. This Methanocaldococcus jannaschii (strain ATCC 43067 / DSM 2661 / JAL-1 / JCM 10045 / NBRC 100440) (Methanococcus jannaschii) protein is Digeranylgeranylglycerophospholipid reductase.